A 421-amino-acid chain; its full sequence is Isocitrate dehydrogenase [NADP], mitochondrial (421 aa).

A mitochondrion-targeting transit peptide spans Ala-1 to Tyr-8. 4 positions are modified to N6-acetyllysine: Lys-14, Lys-17, Lys-36, and Lys-38. N6-acetyllysine; alternate occurs at positions 49 and 75. An N6-succinyllysine; alternate mark is found at Lys-49 and Lys-75. NADP(+) is bound by residues Thr-84 to Thr-86 and Arg-91. Thr-86 contributes to the D-threo-isocitrate binding site. D-threo-isocitrate-binding positions include Ser-103–Arg-109 and Arg-118. N6-acetyllysine is present on Lys-124. Lys-135 carries the N6-acetyllysine; alternate modification. Position 135 is an N6-succinyllysine; alternate (Lys-135). Arg-141 serves as a coordination point for D-threo-isocitrate. N6-acetyllysine; alternate is present on residues Lys-149 and Lys-162. Lys-149 and Lys-162 each carry N6-succinyllysine; alternate. Lys-168 bears the N6-acetyllysine mark. N6-acetyllysine; alternate is present on Lys-225. Lys-225 carries the post-translational modification N6-succinyllysine; alternate. N6-acetyllysine occurs at positions 232, 241, 244, and 249. Position 251 is an N6-acetyllysine; alternate (Lys-251). Position 251 is an N6-succinyllysine; alternate (Lys-251). Asp-260 contacts Mn(2+). Lys-268 lines the NADP(+) pocket. Asp-283 serves as a coordination point for Mn(2+). Residues Gly-318 to His-323 and Asn-336 contribute to the NADP(+) site. Position 353 is an N6-acetyllysine; alternate (Lys-353). Residue Lys-353 is modified to N6-succinyllysine; alternate. N6-acetyllysine is present on residues Lys-369, Lys-382, and Lys-411.

It belongs to the isocitrate and isopropylmalate dehydrogenases family. Homodimer. The cofactor is Mg(2+). It depends on Mn(2+) as a cofactor. Acetylation at Lys-382 dramatically reduces catalytic activity. Deacetylated by SIRT3.

Its subcellular location is the mitochondrion. It carries out the reaction D-threo-isocitrate + NADP(+) = 2-oxoglutarate + CO2 + NADPH. Its function is as follows. Plays a role in intermediary metabolism and energy production. It may tightly associate or interact with the pyruvate dehydrogenase complex. In Sus scrofa (Pig), this protein is Isocitrate dehydrogenase [NADP], mitochondrial (IDH2).